We begin with the raw amino-acid sequence, 91 residues long: Small ribosomal subunit protein uS19 (91 aa).

It belongs to the universal ribosomal protein uS19 family.

Functionally, protein S19 forms a complex with S13 that binds strongly to the 16S ribosomal RNA. The chain is Small ribosomal subunit protein uS19 from Afipia carboxidovorans (strain ATCC 49405 / DSM 1227 / KCTC 32145 / OM5) (Oligotropha carboxidovorans).